The chain runs to 438 residues: Adenosylhomocysteinase (438 aa).

Substrate is bound by residues threonine 64, aspartate 139, and glutamate 164. 165-167 (TTT) provides a ligand contact to NAD(+). The substrate site is built by lysine 194 and aspartate 198. NAD(+)-binding positions include asparagine 199, 228 to 233 (GYGDVG), glutamate 251, asparagine 286, 307 to 309 (IGH), and asparagine 352.

Belongs to the adenosylhomocysteinase family. NAD(+) is required as a cofactor.

It localises to the cytoplasm. The enzyme catalyses S-adenosyl-L-homocysteine + H2O = L-homocysteine + adenosine. It participates in amino-acid biosynthesis; L-homocysteine biosynthesis; L-homocysteine from S-adenosyl-L-homocysteine: step 1/1. In terms of biological role, may play a key role in the regulation of the intracellular concentration of adenosylhomocysteine. The sequence is that of Adenosylhomocysteinase from Coxiella burnetii (strain Dugway 5J108-111).